A 282-amino-acid chain; its full sequence is Probable xyloglucan endotransglucosylase/hydrolase protein 18 (282 aa).

An N-terminal signal peptide occupies residues 1-26 (MKLSCGTSFAFLIMFLFAAQSMHVYA). In terms of domain architecture, GH16 spans 27–218 (GSFHKDVQIH…WSKAPFTAFY (192 aa)). Glu104 functions as the Nucleophile in the catalytic mechanism. The Proton donor role is filled by Glu108. Glu108 is a xyloglucan binding site. Residue Asn112 is glycosylated (N-linked (GlcNAc...) asparagine). Xyloglucan contacts are provided by residues 121-123 (HTN), 131-133 (DKE), 197-198 (HW), and Gly202. An intrachain disulfide couples Cys226 to Cys235. A glycan (N-linked (GlcNAc...) asparagine) is linked at Asn238. A disulfide bond links Cys267 and Cys281. Arg272 contributes to the xyloglucan binding site.

Belongs to the glycosyl hydrolase 16 family. XTH group 2 subfamily. In terms of processing, contains at least one intrachain disulfide bond essential for its enzymatic activity. As to expression, root specific.

Its subcellular location is the secreted. The protein localises to the cell wall. It localises to the extracellular space. It is found in the apoplast. The enzyme catalyses breaks a beta-(1-&gt;4) bond in the backbone of a xyloglucan and transfers the xyloglucanyl segment on to O-4 of the non-reducing terminal glucose residue of an acceptor, which can be a xyloglucan or an oligosaccharide of xyloglucan.. Catalyzes xyloglucan endohydrolysis (XEH) and/or endotransglycosylation (XET). Cleaves and religates xyloglucan polymers, an essential constituent of the primary cell wall, and thereby participates in cell wall construction of growing tissues. This Arabidopsis thaliana (Mouse-ear cress) protein is Probable xyloglucan endotransglucosylase/hydrolase protein 18 (XTH18).